A 300-amino-acid polypeptide reads, in one-letter code: Ribosomal RNA small subunit methyltransferase H (300 aa).

Residues 46–48, Asp65, Phe92, Asp107, and Gln114 each bind S-adenosyl-L-methionine; that span reads GGH.

The protein belongs to the methyltransferase superfamily. RsmH family.

It is found in the cytoplasm. It carries out the reaction cytidine(1402) in 16S rRNA + S-adenosyl-L-methionine = N(4)-methylcytidine(1402) in 16S rRNA + S-adenosyl-L-homocysteine + H(+). In terms of biological role, specifically methylates the N4 position of cytidine in position 1402 (C1402) of 16S rRNA. This Prochlorococcus marinus (strain AS9601) protein is Ribosomal RNA small subunit methyltransferase H.